The chain runs to 306 residues: Eukaryotic translation initiation factor 2 subunit alpha (306 aa).

An S1 motif domain is found at 17-88 (DELVVVNVRQ…EKGYIDLSKR (72 aa)). Phosphoserine is present on S52. Phosphothreonine is present on T179. Residues S273, S295, S303, and S305 each carry the phosphoserine modification.

This sequence belongs to the eIF-2-alpha family. Eukaryotic translation initiation factor 2 eIF2 is a heterotrimeric complex composed of an alpha, a beta and a gamma subunit.

Its subcellular location is the cytoplasm. It localises to the cytosol. Functionally, eIF-2 functions in the early steps of protein synthesis by forming a ternary complex with GTP and initiator tRNA. This complex binds to a 40S ribosomal subunit, followed by mRNA binding to form a 43S pre-initiation complex. Junction of the 60S ribosomal subunit to form the 80S initiation complex is preceded by hydrolysis of the GTP bound to eIF-2 and release of an eIF-2-GDP binary complex. In order for eIF-2 to recycle and catalyze another round of initiation, the GDP bound to eIF-2 must exchange with GTP by way of a reaction catalyzed by eIF2B. This is Eukaryotic translation initiation factor 2 subunit alpha (tif211) from Schizosaccharomyces pombe (strain 972 / ATCC 24843) (Fission yeast).